Reading from the N-terminus, the 79-residue chain is ATP synthase subunit c (79 aa).

Helical transmembrane passes span isoleucine 11–leucine 31 and isoleucine 55–isoleucine 75.

This sequence belongs to the ATPase C chain family. F-type ATPases have 2 components, F(1) - the catalytic core - and F(0) - the membrane proton channel. F(1) has five subunits: alpha(3), beta(3), gamma(1), delta(1), epsilon(1). F(0) has three main subunits: a(1), b(2) and c(10-14). The alpha and beta chains form an alternating ring which encloses part of the gamma chain. F(1) is attached to F(0) by a central stalk formed by the gamma and epsilon chains, while a peripheral stalk is formed by the delta and b chains.

It is found in the cell membrane. In terms of biological role, f(1)F(0) ATP synthase produces ATP from ADP in the presence of a proton or sodium gradient. F-type ATPases consist of two structural domains, F(1) containing the extramembraneous catalytic core and F(0) containing the membrane proton channel, linked together by a central stalk and a peripheral stalk. During catalysis, ATP synthesis in the catalytic domain of F(1) is coupled via a rotary mechanism of the central stalk subunits to proton translocation. Key component of the F(0) channel; it plays a direct role in translocation across the membrane. A homomeric c-ring of between 10-14 subunits forms the central stalk rotor element with the F(1) delta and epsilon subunits. The polypeptide is ATP synthase subunit c (Wigglesworthia glossinidia brevipalpis).